Consider the following 309-residue polypeptide: Mitochondrial import receptor subunit TOM34 (309 aa).

Ser-8 is subject to Phosphoserine. 3 TPR repeats span residues 9–42 (VEQLRAAGNQNFRNGQYGEASALYERALRLLQAR), 51–84 (SVLYSNRAACYLKDGNCTDCIKDCTSALALVPFS), and 85–118 (IKPLLRRASAYEALEKYALAYVDYKTVLQIDNSV). The interval 158–189 (WNSLPSDNHKETAKTKSKEATATKSRVPSAGD) is disordered. Ser-160 bears the Phosphoserine mark. Residues 164-178 (DNHKETAKTKSKEAT) are compositionally biased toward basic and acidic residues. Position 186 is a phosphoserine (Ser-186). TPR repeat units lie at residues 193 to 226 (AKALKEEGNDLVKKGNHKKAIEKYSESLLCSSLE), 227 to 260 (SATYSNRALCHLVLKQYKEAVKDCTEALKLDGKN), and 261 to 294 (VKAFYRRAQAYKALKDYKSSLSDISSLLQIEPRN). A Glycyl lysine isopeptide (Lys-Gly) (interchain with G-Cter in SUMO2) cross-link involves residue Lys-197.

It belongs to the Tom34 family. In terms of assembly, interacts with HSP90A, VCP, ATP6V1D, KIAA0665, AMPK, and DMAP1 through its TPR repeat. As to expression, isoform 1 is ubiquitously expressed while isoform 2 is expressed only in mature testicular germ cells. Isoform 1 is expressed in all testicular cells. Isoform 2 is highly expressed in early to late pachytene cells but expression is significantly decreased in round spermatid cells.

It localises to the cytoplasm. Its subcellular location is the mitochondrion outer membrane. In terms of biological role, plays a role in the import of cytosolically synthesized preproteins into mitochondria. Binds the mature portion of precursor proteins. Interacts with cellular components, and possesses weak ATPase activity. May be a chaperone-like protein that helps to keep newly synthesized precursors in an unfolded import compatible state. The protein is Mitochondrial import receptor subunit TOM34 (Tomm34) of Mus musculus (Mouse).